A 361-amino-acid chain; its full sequence is Phosphoserine aminotransferase (361 aa).

Position 42 (R42) interacts with L-glutamate. Pyridoxal 5'-phosphate is bound by residues 76–77 (AR), W102, T153, D173, and Q196. An N6-(pyridoxal phosphate)lysine modification is found at K197. A pyridoxal 5'-phosphate-binding site is contributed by 238-239 (NT).

Belongs to the class-V pyridoxal-phosphate-dependent aminotransferase family. SerC subfamily. In terms of assembly, homodimer. Requires pyridoxal 5'-phosphate as cofactor.

It localises to the cytoplasm. It carries out the reaction O-phospho-L-serine + 2-oxoglutarate = 3-phosphooxypyruvate + L-glutamate. It catalyses the reaction 4-(phosphooxy)-L-threonine + 2-oxoglutarate = (R)-3-hydroxy-2-oxo-4-phosphooxybutanoate + L-glutamate. It participates in amino-acid biosynthesis; L-serine biosynthesis; L-serine from 3-phospho-D-glycerate: step 2/3. It functions in the pathway cofactor biosynthesis; pyridoxine 5'-phosphate biosynthesis; pyridoxine 5'-phosphate from D-erythrose 4-phosphate: step 3/5. Its function is as follows. Catalyzes the reversible conversion of 3-phosphohydroxypyruvate to phosphoserine and of 3-hydroxy-2-oxo-4-phosphonooxybutanoate to phosphohydroxythreonine. The sequence is that of Phosphoserine aminotransferase from Yersinia pestis (strain Pestoides F).